Here is a 476-residue protein sequence, read N- to C-terminus: Membrane-bound lytic murein transglycosylase F (476 aa).

The N-terminal stretch at 1 to 16 (MIKTLFIILLCGILSA) is a signal peptide. Residues 17-259 (CQPVDIQDVD…HLNEKYFGHV (243 aa)) form a non-LT domain region. Residues 260-476 (KRFDYVDTRA…VPAKSHVSAQ (217 aa)) form an LT domain region. Residue Glu304 is part of the active site.

The protein in the N-terminal section; belongs to the bacterial solute-binding protein 3 family. In the C-terminal section; belongs to the transglycosylase Slt family.

The protein localises to the cell outer membrane. It carries out the reaction Exolytic cleavage of the (1-&gt;4)-beta-glycosidic linkage between N-acetylmuramic acid (MurNAc) and N-acetylglucosamine (GlcNAc) residues in peptidoglycan, from either the reducing or the non-reducing ends of the peptidoglycan chains, with concomitant formation of a 1,6-anhydrobond in the MurNAc residue.. Its function is as follows. Murein-degrading enzyme that degrades murein glycan strands and insoluble, high-molecular weight murein sacculi, with the concomitant formation of a 1,6-anhydromuramoyl product. Lytic transglycosylases (LTs) play an integral role in the metabolism of the peptidoglycan (PG) sacculus. Their lytic action creates space within the PG sacculus to allow for its expansion as well as for the insertion of various structures such as secretion systems and flagella. This is Membrane-bound lytic murein transglycosylase F from Shewanella frigidimarina (strain NCIMB 400).